Reading from the N-terminus, the 651-residue chain is Acetyl-coenzyme A synthetase (651 aa).

Residues 190 to 193 (RRGK) and T311 contribute to the CoA site. Residues 387-389 (GEP), 411-416 (DTWWQT), D508, and R523 each bind ATP. Residue S531 coordinates CoA. R534 lines the ATP pocket. Mg(2+) contacts are provided by V545, H547, and V550. K617 is subject to N6-acetyllysine.

It belongs to the ATP-dependent AMP-binding enzyme family. It depends on Mg(2+) as a cofactor. Post-translationally, acetylated. Deacetylation by the SIR2-homolog deacetylase activates the enzyme.

The enzyme catalyses acetate + ATP + CoA = acetyl-CoA + AMP + diphosphate. Catalyzes the conversion of acetate into acetyl-CoA (AcCoA), an essential intermediate at the junction of anabolic and catabolic pathways. AcsA undergoes a two-step reaction. In the first half reaction, AcsA combines acetate with ATP to form acetyl-adenylate (AcAMP) intermediate. In the second half reaction, it can then transfer the acetyl group from AcAMP to the sulfhydryl group of CoA, forming the product AcCoA. M.tuberculosis may use AcsA for both acetate and propionate assimilation. This chain is Acetyl-coenzyme A synthetase, found in Mycobacterium tuberculosis (strain CDC 1551 / Oshkosh).